A 117-amino-acid chain; its full sequence is Protein Wnt-6 (117 aa).

Ser-1 is lipidated: O-palmitoleoyl serine; by PORCN. Residues Cys-83 and Cys-98 are joined by a disulfide bond. Asn-84 carries an N-linked (GlcNAc...) asparagine glycan.

Belongs to the Wnt family. Palmitoleoylation is required for efficient binding to frizzled receptors. Depalmitoleoylation leads to Wnt signaling pathway inhibition.

The protein localises to the secreted. It is found in the extracellular space. The protein resides in the extracellular matrix. In terms of biological role, ligand for members of the frizzled family of seven transmembrane receptors. Probable developmental protein. May be a signaling molecule which affects the development of discrete regions of tissues. Is likely to signal over only few cell diameters. This Thunnus thynnus (Atlantic bluefin tuna) protein is Protein Wnt-6 (wnt6).